The sequence spans 615 residues: Chromosomal replication initiator protein DnaA (615 aa).

Positions 1 to 88 (MSEGQINLAM…RVAVTVDPSA (88 aa)) are domain I, interacts with DnaA modulators. Residues 85 to 272 (DPSAVPPSAP…PTSGGPDQLN (188 aa)) are disordered. Residues 88 to 269 (AVPPSAPTEE…STNPTSGGPD (182 aa)) are domain II. Low complexity-rich tracts occupy residues 94–112 (PTEE…PAPD) and 173–190 (PSSA…VAES). The tract at residues 270-486 (QLNPKYTFDT…GALIRVTAFA (217 aa)) is domain III, AAA+ region. ATP contacts are provided by G314, G316, K317, and T318. Residues 487–615 (SLNRQSVDLH…QQAHHNHHHL (129 aa)) are domain IV, binds dsDNA.

The protein belongs to the DnaA family. Oligomerizes as a right-handed, spiral filament on DNA at oriC.

It is found in the cytoplasm. Its function is as follows. Plays an essential role in the initiation and regulation of chromosomal replication. ATP-DnaA binds to the origin of replication (oriC) to initiate formation of the DNA replication initiation complex once per cell cycle. Binds the DnaA box (a 9 base pair repeat at the origin) and separates the double-stranded (ds)DNA. Forms a right-handed helical filament on oriC DNA; dsDNA binds to the exterior of the filament while single-stranded (ss)DNA is stabiized in the filament's interior. The ATP-DnaA-oriC complex binds and stabilizes one strand of the AT-rich DNA unwinding element (DUE), permitting loading of DNA polymerase. After initiation quickly degrades to an ADP-DnaA complex that is not apt for DNA replication. Binds acidic phospholipids. This Thermobifida fusca (strain YX) protein is Chromosomal replication initiator protein DnaA.